Reading from the N-terminus, the 72-residue chain is ATP synthase subunit c (72 aa).

The next 2 membrane-spanning stretches (helical) occupy residues 5–25 (LLAA…IGIA) and 51–71 (AGLS…LLFV).

It belongs to the ATPase C chain family. F-type ATPases have 2 components, F(1) - the catalytic core - and F(0) - the membrane proton channel. F(1) has five subunits: alpha(3), beta(3), gamma(1), delta(1), epsilon(1). F(0) has three main subunits: a(1), b(2) and c(10-14). The alpha and beta chains form an alternating ring which encloses part of the gamma chain. F(1) is attached to F(0) by a central stalk formed by the gamma and epsilon chains, while a peripheral stalk is formed by the delta and b chains.

The protein resides in the cell membrane. F(1)F(0) ATP synthase produces ATP from ADP in the presence of a proton or sodium gradient. F-type ATPases consist of two structural domains, F(1) containing the extramembraneous catalytic core and F(0) containing the membrane proton channel, linked together by a central stalk and a peripheral stalk. During catalysis, ATP synthesis in the catalytic domain of F(1) is coupled via a rotary mechanism of the central stalk subunits to proton translocation. Functionally, key component of the F(0) channel; it plays a direct role in translocation across the membrane. A homomeric c-ring of between 10-14 subunits forms the central stalk rotor element with the F(1) delta and epsilon subunits. The chain is ATP synthase subunit c from Clostridium perfringens (strain ATCC 13124 / DSM 756 / JCM 1290 / NCIMB 6125 / NCTC 8237 / Type A).